The following is a 406-amino-acid chain: Peptidase T (406 aa).

Zn(2+) is bound at residue histidine 82. Aspartate 84 is a catalytic residue. Aspartate 142 lines the Zn(2+) pocket. Glutamate 176 (proton acceptor) is an active-site residue. Residues glutamate 177, aspartate 199, and histidine 381 each contribute to the Zn(2+) site.

Belongs to the peptidase M20B family. Zn(2+) is required as a cofactor.

Its subcellular location is the cytoplasm. The catalysed reaction is Release of the N-terminal residue from a tripeptide.. Its function is as follows. Cleaves the N-terminal amino acid of tripeptides. This chain is Peptidase T, found in Streptococcus agalactiae serotype Ia (strain ATCC 27591 / A909 / CDC SS700).